The following is a 629-amino-acid chain: tRNA uridine 5-carboxymethylaminomethyl modification enzyme MnmG (629 aa).

11–16 (GGGHAG) serves as a coordination point for FAD. 273–287 (GPRYCPSFEDKAVRF) lines the NAD(+) pocket.

Belongs to the MnmG family. Homodimer. Heterotetramer of two MnmE and two MnmG subunits. The cofactor is FAD.

It localises to the cytoplasm. Functionally, NAD-binding protein involved in the addition of a carboxymethylaminomethyl (cmnm) group at the wobble position (U34) of certain tRNAs, forming tRNA-cmnm(5)s(2)U34. This is tRNA uridine 5-carboxymethylaminomethyl modification enzyme MnmG from Mycoplasma mycoides subsp. mycoides SC (strain CCUG 32753 / NCTC 10114 / PG1).